Here is a 346-residue protein sequence, read N- to C-terminus: Histidinol-phosphate aminotransferase (346 aa).

Lys209 is modified (N6-(pyridoxal phosphate)lysine).

This sequence belongs to the class-II pyridoxal-phosphate-dependent aminotransferase family. Histidinol-phosphate aminotransferase subfamily. As to quaternary structure, homodimer. Pyridoxal 5'-phosphate serves as cofactor.

It carries out the reaction L-histidinol phosphate + 2-oxoglutarate = 3-(imidazol-4-yl)-2-oxopropyl phosphate + L-glutamate. Its pathway is amino-acid biosynthesis; L-histidine biosynthesis; L-histidine from 5-phospho-alpha-D-ribose 1-diphosphate: step 7/9. The protein is Histidinol-phosphate aminotransferase of Flavobacterium psychrophilum (strain ATCC 49511 / DSM 21280 / CIP 103535 / JIP02/86).